The sequence spans 205 residues: Protein PAXX (205 aa).

The region spanning 39–81 is the PISA domain; that stretch reads FNLYVTDAAELWSTCFSPDSLARLKARFGLSGAEDIHSRFRAA. At threonine 147 the chain carries Phosphothreonine. A compositionally biased stretch (polar residues) spans 147 to 159; it reads TITSPKKNTQPAG. A disordered region spans residues 147–205; sequence TITSPKKNTQPAGTQFLPELDHQRGSSGPGVRRRCPGESLINPGFKSKKPAAGVDFDET. Serine 150 carries the phosphoserine modification. The tract at residues 172 to 205 is mediates interaction with XRCC5/Ku80 and XRCC6/Ku70 and association with the non-homologous end joining core complex; that stretch reads SSGPGVRRRCPGESLINPGFKSKKPAAGVDFDET. The XLM signature appears at 191-205; sequence FKSKKPAAGVDFDET.

Belongs to the XRCC4-XLF family. PAXX subfamily. As to quaternary structure, homodimer. Interacts with the DNA-bound XRCC5/Ku80 and XRCC6/Ku70 heterodimer (Ku complex); the interaction is direct. Associated component of the non-homologous end joining (NHEJ) complex, composed of the core proteins PRKDC, LIG4, XRCC4, XRCC6/Ku70, XRCC5/Ku86 and NHEJ1/XLF. Interacts with POLL (DNA polymerase lambda); promoting POLL recruitment to double-strand breaks (DSBs) and stimulation of the end-filling activity of POLL. Phosphorylation may inhibit interaction with the DNA-bound XRCC5/Ku80 and XRCC6/Ku70 heterodimer (Ku complex).

Its subcellular location is the nucleus. It localises to the chromosome. Its function is as follows. Non-essential DNA repair protein involved in DNA non-homologous end joining (NHEJ); participates in double-strand break (DSB) repair and V(D)J recombination. May act as a scaffold required for accumulation of the Ku heterodimer, composed of XRCC5/Ku80 and XRCC6/Ku70, at double-strand break sites and promote the assembly and/or stability of the NHEJ machinery. Involved in NHEJ by promoting the ligation of blunt-ended DNA ends. Together with NHEJ1/XLF, collaborates with DNA polymerase lambda (POLL) to promote joining of non-cohesive DNA ends. Constitutes a non-essential component of classical NHEJ: has a complementary but distinct function with NHEJ1/XLF in DNA repair. In Mus musculus (Mouse), this protein is Protein PAXX.